Consider the following 1205-residue polypeptide: Partitioning defective 3 homolog B (1205 aa).

Disordered regions lie at residues 83-104 (EPLHKIESPSGNPADRQSPDAF) and 137-165 (VRRSSDPVPGPPADTQPSASHPGGQSLKL). Phosphoserine is present on Ser100. The 89-residue stretch at 201 to 289 (TRTVEISGEG…SPSVLLHVLP (89 aa)) folds into the PDZ 1 domain. The segment at 318 to 374 (VPPPVHGKSGLKTANLTGTDSPETDASASLQQNKSPRVPRLGGKPSSPSLSPLMGFG) is disordered. Polar residues predominate over residues 329–352 (KTANLTGTDSPETDASASLQQNKS). Phosphoserine is present on residues Ser346, Ser352, and Ser368. Positions 356 to 374 (PRLGGKPSSPSLSPLMGFG) are enriched in low complexity. PDZ domains are found at residues 383–468 (KIDL…VIAR) and 498–585 (EIPL…GMIQ). A phosphoserine mark is found at Ser635, Ser710, Ser728, Ser730, Ser746, Ser749, and Ser801. A disordered region spans residues 707–743 (ASKSMDLVPDESKVHSLAGQKSESPSKDFGPTLGLKK). Disordered regions lie at residues 784-921 (AIDK…KHQE) and 1111-1205 (PYYP…TAAV). Over residues 806–822 (HSGQGALNCESAPQGNS) the composition is skewed to polar residues. Composition is skewed to basic and acidic residues over residues 838–865 (KEKEKKKEKGKLKVKEKKRKEENEDPER) and 881–921 (KKED…KHQE). Ser1184 carries the phosphoserine modification.

This sequence belongs to the PAR3 family. Interacts with PARD6B. Interacts with INSC/inscuteable. As to expression, highly expressed in kidney, lung and skeletal muscle. Expressed at intermediate levels in brain, heart, placenta, liver and pancreas. Isoform 1 is predominant, while isoform 2 and isoform 3 are expressed at lower levels.

Its subcellular location is the endomembrane system. The protein resides in the cell junction. The protein localises to the tight junction. Putative adapter protein involved in asymmetrical cell division and cell polarization processes. May play a role in the formation of epithelial tight junctions. This chain is Partitioning defective 3 homolog B (PARD3B), found in Homo sapiens (Human).